We begin with the raw amino-acid sequence, 430 residues long: Glutamate-1-semialdehyde 2,1-aminomutase (430 aa).

Lysine 270 is subject to N6-(pyridoxal phosphate)lysine.

The protein belongs to the class-III pyridoxal-phosphate-dependent aminotransferase family. HemL subfamily. As to quaternary structure, homodimer. Pyridoxal 5'-phosphate serves as cofactor.

It localises to the cytoplasm. The catalysed reaction is (S)-4-amino-5-oxopentanoate = 5-aminolevulinate. It participates in porphyrin-containing compound metabolism; protoporphyrin-IX biosynthesis; 5-aminolevulinate from L-glutamyl-tRNA(Glu): step 2/2. The protein is Glutamate-1-semialdehyde 2,1-aminomutase of Cupriavidus metallidurans (strain ATCC 43123 / DSM 2839 / NBRC 102507 / CH34) (Ralstonia metallidurans).